We begin with the raw amino-acid sequence, 115 residues long: Autophagy-related protein 8i (115 aa).

Gly115 carries Phosphatidylethanolamine amidated glycine lipidation.

This sequence belongs to the ATG8 family. In terms of assembly, interacts with ATG4. Interacts with NBR1. Gly-115 forms then a thioester bond with the 'Cys-558' of ATG7 (E1-like activating enzyme) before being transferred to the 'Cys-258' of ATG3 (the specific E2 conjugating enzyme), in order to be finally amidated with phosphatidylethanolamine. This lipid modification anchors ATG8 to autophagosomes. In terms of tissue distribution, constitutively expressed.

It is found in the cytoplasmic vesicle. Its subcellular location is the autophagosome membrane. The protein localises to the vacuole membrane. The protein resides in the cytoplasm. It localises to the cytoskeleton. Its function is as follows. Ubiquitin-like modifier involved in autophagosomes formation. May mediate the delivery of the autophagosomes to the vacuole via the microtubule cytoskeleton. This chain is Autophagy-related protein 8i (ATG8I), found in Arabidopsis thaliana (Mouse-ear cress).